A 358-amino-acid chain; its full sequence is UDP-3-O-acylglucosamine N-acyltransferase (358 aa).

The Proton acceptor role is filled by His-248.

It belongs to the transferase hexapeptide repeat family. LpxD subfamily. As to quaternary structure, homotrimer.

The enzyme catalyses a UDP-3-O-[(3R)-3-hydroxyacyl]-alpha-D-glucosamine + a (3R)-hydroxyacyl-[ACP] = a UDP-2-N,3-O-bis[(3R)-3-hydroxyacyl]-alpha-D-glucosamine + holo-[ACP] + H(+). The protein operates within bacterial outer membrane biogenesis; LPS lipid A biosynthesis. Catalyzes the N-acylation of UDP-3-O-acylglucosamine using 3-hydroxyacyl-ACP as the acyl donor. Is involved in the biosynthesis of lipid A, a phosphorylated glycolipid that anchors the lipopolysaccharide to the outer membrane of the cell. This Synechococcus sp. (strain WH7803) protein is UDP-3-O-acylglucosamine N-acyltransferase.